The following is a 497-amino-acid chain: Putative aldehyde dehydrogenase AldA (497 aa).

213–219 is a binding site for NAD(+); it reads GKGSESG. Catalysis depends on residues glutamate 257 and cysteine 291.

It belongs to the aldehyde dehydrogenase family.

The catalysed reaction is an aldehyde + NAD(+) + H2O = a carboxylate + NADH + 2 H(+). This is Putative aldehyde dehydrogenase AldA (aldA) from Staphylococcus epidermidis (strain ATCC 35984 / DSM 28319 / BCRC 17069 / CCUG 31568 / BM 3577 / RP62A).